The sequence spans 1495 residues: Nuclear pore complex protein NUP160 (1495 aa).

In terms of assembly, part of the nuclear pore complex (NPC). The NPC has an eight-fold symmetrical structure comprising a central transport channel and two rings, the cytoplasmic and nuclear rings, to which eight filaments are attached. The cytoplasmic filaments have loose ends, while the nuclear filaments are joined in a distal ring, forming a nuclear basket. NPCs are highly dynamic in configuration and composition, and can be devided in 3 subcomplexes, the NUP62 subcomplex, the NUP107-160 subcomplex and the NUP93 subcomplex, containing approximately 30 different nucleoporin proteins. In terms of tissue distribution, expressed in roots, stems, anthers, siliques and vascular tissues of cotyledons, leaves and hypocotyls.

It is found in the nucleus membrane. It localises to the nucleus. The protein localises to the nuclear pore complex. In terms of biological role, contributes to the transfer of mature mRNA from the nucleus to the cytosol. Required for both R gene-mediated and basal disease resistance. RNA export seems to play a critical role in stress responses and regulation of plant growth and development. Required for proper expression of factors associated with auxin signaling. This is Nuclear pore complex protein NUP160 from Arabidopsis thaliana (Mouse-ear cress).